An 811-amino-acid chain; its full sequence is Protein MEI2-like 5 (811 aa).

RRM domains lie at 193–266 (RTLF…YSIP) and 278–351 (GTLV…PSRP). Residues 371–397 (TKHNSFQIGSPSANSPPSLWSQLGSPT) are disordered. Residues 374–397 (NSFQIGSPSANSPPSLWSQLGSPT) show a composition bias toward polar residues.

Probable RNA-binding protein that may play a role in growth regulation. The chain is Protein MEI2-like 5 (ML5) from Oryza sativa subsp. japonica (Rice).